We begin with the raw amino-acid sequence, 378 residues long: Ribosomal RNA large subunit methyltransferase G (378 aa).

This sequence belongs to the methyltransferase superfamily. RlmG family.

Its subcellular location is the cytoplasm. The enzyme catalyses guanosine(1835) in 23S rRNA + S-adenosyl-L-methionine = N(2)-methylguanosine(1835) in 23S rRNA + S-adenosyl-L-homocysteine + H(+). Functionally, specifically methylates the guanine in position 1835 (m2G1835) of 23S rRNA. The polypeptide is Ribosomal RNA large subunit methyltransferase G (Escherichia coli O6:K15:H31 (strain 536 / UPEC)).